The following is a 401-amino-acid chain: ATP phosphoribosyltransferase regulatory subunit (401 aa).

It belongs to the class-II aminoacyl-tRNA synthetase family. HisZ subfamily. In terms of assembly, heteromultimer composed of HisG and HisZ subunits.

It is found in the cytoplasm. The protein operates within amino-acid biosynthesis; L-histidine biosynthesis; L-histidine from 5-phospho-alpha-D-ribose 1-diphosphate: step 1/9. Required for the first step of histidine biosynthesis. May allow the feedback regulation of ATP phosphoribosyltransferase activity by histidine. The protein is ATP phosphoribosyltransferase regulatory subunit of Cyanothece sp. (strain PCC 7425 / ATCC 29141).